The chain runs to 80 residues: Putative membrane protein insertion efficiency factor (80 aa).

The protein belongs to the UPF0161 family.

It localises to the cell inner membrane. In terms of biological role, could be involved in insertion of integral membrane proteins into the membrane. The sequence is that of Putative membrane protein insertion efficiency factor from Syntrophobacter fumaroxidans (strain DSM 10017 / MPOB).